We begin with the raw amino-acid sequence, 95 residues long: Aspartyl/glutamyl-tRNA(Asn/Gln) amidotransferase subunit C (95 aa).

Belongs to the GatC family. As to quaternary structure, heterotrimer of A, B and C subunits.

The catalysed reaction is L-glutamyl-tRNA(Gln) + L-glutamine + ATP + H2O = L-glutaminyl-tRNA(Gln) + L-glutamate + ADP + phosphate + H(+). It carries out the reaction L-aspartyl-tRNA(Asn) + L-glutamine + ATP + H2O = L-asparaginyl-tRNA(Asn) + L-glutamate + ADP + phosphate + 2 H(+). Functionally, allows the formation of correctly charged Asn-tRNA(Asn) or Gln-tRNA(Gln) through the transamidation of misacylated Asp-tRNA(Asn) or Glu-tRNA(Gln) in organisms which lack either or both of asparaginyl-tRNA or glutaminyl-tRNA synthetases. The reaction takes place in the presence of glutamine and ATP through an activated phospho-Asp-tRNA(Asn) or phospho-Glu-tRNA(Gln). The chain is Aspartyl/glutamyl-tRNA(Asn/Gln) amidotransferase subunit C from Geotalea uraniireducens (strain Rf4) (Geobacter uraniireducens).